Consider the following 315-residue polypeptide: tRNA dimethylallyltransferase (315 aa).

13 to 20 contacts ATP; the sequence is GPTAVGKT. 15–20 is a binding site for substrate; the sequence is TAVGKT. The interaction with substrate tRNA stretch occupies residues 38-41; that stretch reads DSMQ.

The protein belongs to the IPP transferase family. Monomer. Mg(2+) is required as a cofactor.

It catalyses the reaction adenosine(37) in tRNA + dimethylallyl diphosphate = N(6)-dimethylallyladenosine(37) in tRNA + diphosphate. Its function is as follows. Catalyzes the transfer of a dimethylallyl group onto the adenine at position 37 in tRNAs that read codons beginning with uridine, leading to the formation of N6-(dimethylallyl)adenosine (i(6)A). In Staphylococcus saprophyticus subsp. saprophyticus (strain ATCC 15305 / DSM 20229 / NCIMB 8711 / NCTC 7292 / S-41), this protein is tRNA dimethylallyltransferase.